We begin with the raw amino-acid sequence, 520 residues long: MNTTVSNQTPRIRIFDTTLRDGEQSPGCSMTPQQKLVMARALDELGVDIIETGFPASSHSDREAVAMMGRELRRPTLAVLSRCLQADIETSAKALETAANPRLHVFLSTSPLHREHKLRMSREQVLESVHRHVTLARGYIDDVEFSAEDATRTEEDFLAEVTRVAIAAGATTINLPDTVGFTTPEEIRGMFSRLIASVEGADKVIFSAHCHNDLGLAVANSLAAIEGGARQVECTINGIGERAGNCALEEITMALKVRGAFYNIDSAINTPRIVSTSQLLQRLVGMPVQRNKAVVGGNAFAHESGIHQHGMLRHRGTYEIMRPEDVGWESSQMVLGRHSGRAAVEQRLRALGYLLEEEEVKLVFEQFKALCEKQRVVTDADLQALMQDATVQEGYRLASMTISDVGSRANALVELSDPEGNRVAETAQGNGPVDALFGALASATGVKLELDSYQVHSVGIGADARGEASLSVRHDGVEYEGTGTSKDIIEASALAWLDVANRLLRQRERGVVAGKTAAVA.

The 263-residue stretch at 12-274 (IRIFDTTLRD…DSAINTPRIV (263 aa)) folds into the Pyruvate carboxyltransferase domain. Mn(2+) contacts are provided by D21, H209, H211, and N245. The tract at residues 396–520 (RLASMTISDV…VVAGKTAAVA (125 aa)) is regulatory domain.

It belongs to the alpha-IPM synthase/homocitrate synthase family. LeuA type 1 subfamily. As to quaternary structure, homodimer. The cofactor is Mn(2+).

Its subcellular location is the cytoplasm. The catalysed reaction is 3-methyl-2-oxobutanoate + acetyl-CoA + H2O = (2S)-2-isopropylmalate + CoA + H(+). Its pathway is amino-acid biosynthesis; L-leucine biosynthesis; L-leucine from 3-methyl-2-oxobutanoate: step 1/4. Its function is as follows. Catalyzes the condensation of the acetyl group of acetyl-CoA with 3-methyl-2-oxobutanoate (2-ketoisovalerate) to form 3-carboxy-3-hydroxy-4-methylpentanoate (2-isopropylmalate). The sequence is that of 2-isopropylmalate synthase from Xanthomonas euvesicatoria pv. vesicatoria (strain 85-10) (Xanthomonas campestris pv. vesicatoria).